Here is a 273-residue protein sequence, read N- to C-terminus: uncharacterized protein (273 aa).

The next 2 helical transmembrane spans lie at 24–44 and 103–123; these read VGVSAIDGLIAAVVAGPVTIL and IVGPWAIGFSLGLSLGGEAWA. Residues 132–194 are disordered; sequence SDLPHHGRQS…QPPAQTQPYR (63 aa). Basic residues predominate over residues 164–179; it reads SSHHIRSPAVARHHKT. Residues 183–192 show a composition bias toward low complexity; it reads TTQPPAQTQP.

It localises to the cell membrane. This is an uncharacterized protein from Sinorhizobium fredii (strain NBRC 101917 / NGR234).